Consider the following 291-residue polypeptide: Small ribosomal subunit protein uS2 (291 aa).

The interval 256-291 (LRGEGTAPAASEEQPAEEPAPAAAEAQTDAAVGTAV) is disordered. The segment covering 261–291 (TAPAASEEQPAEEPAPAAAEAQTDAAVGTAV) has biased composition (low complexity).

Belongs to the universal ribosomal protein uS2 family.

The sequence is that of Small ribosomal subunit protein uS2 from Frankia alni (strain DSM 45986 / CECT 9034 / ACN14a).